The chain runs to 1781 residues: Atrochrysone carboxylic acid synthase (1781 aa).

The segment at 15–253 (TRDLFRRLHV…KHVALPVYAG (239 aa)) is N-terminal acylcarrier protein transacylase domain (SAT). A Ketosynthase family 3 (KS3) domain is found at 390 to 823 (QSKIAIVGMA…GGNTSVVVEE (434 aa)). Residues cysteine 563, histidine 698, and histidine 741 each act as for beta-ketoacyl synthase activity in the active site. A malonyl-CoA:ACP transacylase (MAT) domain region spans residues 925–1244 (FAFTGQGASH…SLGLLHCAGL (320 aa)). Positions 1312–1631 (TSTVQQIIEE…RVLLNRFFSA (320 aa)) are product template (PT) domain. The N-terminal hotdog fold stretch occupies residues 1316-1451 (QQIIEETFSD…ADIVYGLPTD (136 aa)). The PKS/mFAS DH domain maps to 1316–1626 (QQIIEETFSD…FRRYPRVLLN (311 aa)). Catalysis depends on histidine 1348, which acts as the Proton acceptor; for dehydratase activity. Positions 1478–1626 (IANRLSHNMA…FRRYPRVLLN (149 aa)) are C-terminal hotdog fold. The Proton donor; for dehydratase activity role is filled by aspartate 1537. The disordered stretch occupies residues 1633–1653 (DSDTSKHTSATDVSPPKKVVQ). The Carrier domain maps to 1703 to 1780 (VDSDSTASKA…DLKAWLMEYY (78 aa)). The residue at position 1740 (serine 1740) is an O-(pantetheine 4'-phosphoryl)serine.

The enzyme catalyses holo-[ACP] + 8 malonyl-CoA + 8 H(+) = atrochrysone carboxyl-[ACP] + 8 CO2 + 8 CoA + 2 H2O. Its pathway is secondary metabolite biosynthesis. Atrochrysone carboxylic acid synthase; part of the gene cluster that mediates the biosynthesis of the dimeric xanthones cryptosporioptides. The pathway begins with the synthesis of atrochrysone thioester by the polyketide synthase dmx-nrPKS. The atrochrysone carboxyl ACP thioesterase dmxR1 then breaks the thioester bond and releases the atrochrysone carboxylic acid from dmx-nrPKS. Atrochrysone carboxylic acid is decarboxylated by the decarboxylase dmxR15, and oxidized by the anthrone oxygenase dmxR16 to yield emodin. Emodin is then reduced to emodin hydroquinone by the oxidoreductase dmxR7. A-ring reduction by the short chain dehydrogenase dmxR18, dehydration by the scytalone dehydratase-like protein dmxR17 and probable spontaneous re-oxidation, results in overall deoxygenation to chrysophanol. Baeyer-Villiger oxidation by the Baeyer-Villiger monooxygenase (BVMO) dmxR6 then yields monodictylactone in equilibrium with monodictyphenone. In the case of the cryptosporioptides biosynthesis, monodictylactone is reduced at C-12 to an alcohol (by the short chain dehydrogenases dmxR12 or dmxR8) and hydroxylated at C-5 by dmxR9, yielding the electron-rich aromatic which could eliminate H(2)O to form the ortho-quinonemethide, followed by tautomerisation to paraquinone and complete the formal reduction to produce the 10-methylgroup. Conjugate addition of C-4a-OH to the resulting paraquinone by the monooxygenase dmxR10 then gives cyclohexadienone, which is then reduced at C-5 by the short chain dehydrogenase dmxR3 to give the dihydroxanthone. The 6,7-epoxide in the cryptosporioptides could be introduced by the cytochrome P450 monooxygenase dmxL3. The highly reducing PKS dmxL2 manufactures butyrate, which is further carboxylated by dmxL1 to form ethylmalonate. It is not yet clear whether the carboxylation occurs while the butyrate is attached to the ACP of dmxL2, but this unusual fungal metabolite could then be esterified to O-5 by the O-acetyltransferase dmxR13. Finally, dimerization performed by dmxR5 gives the observed dimers cryptosporioptides A, B and C as the final products of the pathway. The chain is Atrochrysone carboxylic acid synthase from Cryptosporiopsis sp. (strain 8999).